We begin with the raw amino-acid sequence, 64 residues long: Large ribosomal subunit protein bL35 (64 aa).

A disordered region spans residues 27-47 (MNGSHNLEKKNRKRSRRLHQA). The segment covering 36–45 (KNRKRSRRLH) has biased composition (basic residues).

The protein belongs to the bacterial ribosomal protein bL35 family.

The polypeptide is Large ribosomal subunit protein bL35 (Chlorobium phaeobacteroides (strain DSM 266 / SMG 266 / 2430)).